Reading from the N-terminus, the 140-residue chain is Putative transcription elongation factor S-II-like protein 349L (140 aa).

Residues 100 to 139 form a TFIIS-type zinc finger; the sequence is GAIKCKCGSERVFSFSKQTRSGDESTSVFALCSSCKSKWV. Residues Cys104, Cys106, Cys131, and Cys134 each coordinate Zn(2+).

It belongs to the IIV-6 349L family.

The sequence is that of Putative transcription elongation factor S-II-like protein 349L from Acheta domesticus (House cricket).